The chain runs to 62 residues: Large ribosomal subunit protein bL28 (62 aa).

The tract at residues 1–23 (MGKQCYVTGRKASTGNRRSHALN) is disordered.

This sequence belongs to the bacterial ribosomal protein bL28 family.

In Staphylococcus carnosus (strain TM300), this protein is Large ribosomal subunit protein bL28.